The chain runs to 311 residues: Olfactory receptor 1D4 (311 aa).

Over 1–25 the chain is Extracellular; the sequence is MDGDNQSENSQFLLLGISESPEQQQ. N-linked (GlcNAc...) asparagine glycosylation is present at Asn-5. Residues 26–49 form a helical membrane-spanning segment; that stretch reads ILFWMFLSMYLVTVLGNVLIILAI. The Cytoplasmic segment spans residues 50 to 57; it reads SSDSHLHT. A helical transmembrane segment spans residues 58–79; the sequence is PMYFFLANLSFTDLFFVTNTIP. The Extracellular segment spans residues 80–100; sequence KMLVNFQSQNKAISYAGCLTQ. Cysteines 97 and 189 form a disulfide. The chain crosses the membrane as a helical span at residues 101–120; sequence LYFLVSLVTLDNLILAVMAY. Residues 121 to 140 lie on the Cytoplasmic side of the membrane; that stretch reads DRYVAICCPLHYVTAMSPGL. The helical transmembrane segment at 141–158 threads the bilayer; that stretch reads CVLLLSLCWGLSVLYGLL. Residues 159–196 lie on the Extracellular side of the membrane; sequence LTFLLTRVTFCGPREIHYLFCDMYILLWLACSNTHIIH. Residues 197-220 form a helical membrane-spanning segment; the sequence is TALIATGCFIFLTLLGFMTTSYVR. Over 221 to 237 the chain is Cytoplasmic; it reads IVRTILQMPSASKKYKT. A helical transmembrane segment spans residues 238–260; it reads FSTCASHLGVVSLFYGTLAMVYL. At 261–271 the chain is on the extracellular side; that stretch reads QPLHTYSMKDS. A helical membrane pass occupies residues 272-291; the sequence is VATVMYAVLTPMMNPFIYSL. The Cytoplasmic segment spans residues 292-311; that stretch reads RNKDMHGAPGRVLWRPFQRP.

This sequence belongs to the G-protein coupled receptor 1 family.

The protein localises to the cell membrane. In terms of biological role, odorant receptor. The protein is Olfactory receptor 1D4 (OR1D4) of Homo sapiens (Human).